A 370-amino-acid chain; its full sequence is Platelet-derived growth factor D (370 aa).

The N-terminal stretch at 1 to 23 (MHRLILVSILVCANFCCYRDTFA) is a signal peptide. The 119-residue stretch at 52-170 (RDENIRVTGT…PGFKIYYSFV (119 aa)) folds into the CUB domain. A disulfide bridge connects residues cysteine 109 and cysteine 131. N-linked (GlcNAc...) asparagine glycosylation is present at asparagine 276. 2 cysteine pairs are disulfide-bonded: cysteine 302–cysteine 360 and cysteine 306–cysteine 362.

This sequence belongs to the PDGF/VEGF growth factor family. As to quaternary structure, homodimer; disulfide-linked. Interacts with PDGFRB homodimers, and with heterodimers formed by PDGFRA and PDGFRB. In terms of processing, activated by proteolytic cleavage. Proteolytic removal of the N-terminal CUB domain releasing the core domain is necessary for unmasking the receptor-binding epitopes of the core domain. Cleavage after Arg-247 or Arg-249 by urokinase plasminogen activator gives rise to the active form. In terms of tissue distribution, widely expressed. Expressed at high levels in the kidney, adrenal glands, eye and CNS. In the kidney the localization is confined to arterial and arteriolar vascular smooth muscle cells and is also detected at low levels in the glomeruli In the eye in the anterior segment it is localized to the iris and ciliary body. In the retina localizes intensely to the outer plexiform layer, which contains photoreceptor axons and the synaptic layer between photoreceptors and second order neurons. In the spinal cord, prominently expressed in the motorneurons.

The protein resides in the secreted. Its function is as follows. Growth factor that plays an essential role in the regulation of embryonic development, cell proliferation, cell migration, survival and chemotaxis. Potent mitogen for cells of mesenchymal origin. Plays an important role in wound healing. Induces macrophage recruitment, increased interstitial pressure, and blood vessel maturation during angiogenesis. May play an important role in control of lens epithelial cell proliferation. Can initiate events that lead to a mesangial proliferative glomerulonephritis, including influx of monocytes and macrophages and production of extracellular matrix. The chain is Platelet-derived growth factor D (Pdgfd) from Rattus norvegicus (Rat).